The chain runs to 369 residues: S-(hydroxymethyl)glutathione dehydrogenase (369 aa).

C40, H62, C92, C95, C98, C106, and C169 together coordinate Zn(2+).

This sequence belongs to the zinc-containing alcohol dehydrogenase family. Class-III subfamily. Homodimer. Zn(2+) serves as cofactor.

The protein localises to the cytoplasm. It catalyses the reaction S-(hydroxymethyl)glutathione + NADP(+) = S-formylglutathione + NADPH + H(+). The catalysed reaction is S-(hydroxymethyl)glutathione + NAD(+) = S-formylglutathione + NADH + H(+). The enzyme catalyses a primary alcohol + NAD(+) = an aldehyde + NADH + H(+). It carries out the reaction a secondary alcohol + NAD(+) = a ketone + NADH + H(+). It catalyses the reaction S-nitrosoglutathione + NADH + H(+) = S-(hydroxysulfenamide)glutathione + NAD(+). Has high formaldehyde dehydrogenase activity in the presence of glutathione and catalyzes the oxidation of normal alcohols in a reaction that is not GSH-dependent. In addition, hemithiolacetals other than those formed from GSH, including omega-thiol fatty acids, also are substrates. Also acts as a S-nitroso-glutathione reductase by catalyzing the NADH-dependent reduction of S-nitrosoglutathione. In Photobacterium damsela subsp. piscicida (Pasteurella piscicida), this protein is S-(hydroxymethyl)glutathione dehydrogenase (frmA).